A 127-amino-acid chain; its full sequence is 3-aminoacrylate deaminase RutC (127 aa).

It belongs to the RutC family.

It carries out the reaction (Z)-3-aminoacrylate + H2O + H(+) = 3-oxopropanoate + NH4(+). Functionally, involved in pyrimidine catabolism. Catalyzes the deamination of 3-aminoacrylate to malonic semialdehyde, a reaction that can also occur spontaneously. RutC may facilitate the reaction and modulate the metabolic fitness, rather than catalyzing essential functions. The polypeptide is 3-aminoacrylate deaminase RutC (Pseudomonas syringae pv. syringae (strain B728a)).